The primary structure comprises 218 residues: MNIIDLGLIRYAEADALQRARLEEVAAGAEETLYLLEHHPVITLGRNGGGENLHVGREWLATQGIDLVQSSRGGNITCHFPGQLVAYPVFRVAKRPGGLRQMFHDLEEVVITTLAHFGLSAARWEGRPGVWIENRKICSIGMAVRRWTSYHGFALNVGRDLSLFEMITLCGLPDAQATSLYRELGGDAPTMQEVKDVCARQFRAIFADSTVAAGQAAL.

One can recognise a BPL/LPL catalytic domain in the interval Ala27–Thr210. Substrate-binding positions include Arg72–His79, Ser139–Gly141, and Gly152–Ala154. The Acyl-thioester intermediate role is filled by Cys170.

The protein belongs to the LipB family.

The protein localises to the cytoplasm. It catalyses the reaction octanoyl-[ACP] + L-lysyl-[protein] = N(6)-octanoyl-L-lysyl-[protein] + holo-[ACP] + H(+). It functions in the pathway protein modification; protein lipoylation via endogenous pathway; protein N(6)-(lipoyl)lysine from octanoyl-[acyl-carrier-protein]: step 1/2. Catalyzes the transfer of endogenously produced octanoic acid from octanoyl-acyl-carrier-protein onto the lipoyl domains of lipoate-dependent enzymes. Lipoyl-ACP can also act as a substrate although octanoyl-ACP is likely to be the physiological substrate. The sequence is that of Octanoyltransferase from Nitratidesulfovibrio vulgaris (strain DSM 19637 / Miyazaki F) (Desulfovibrio vulgaris).